The following is a 307-amino-acid chain: Leucine-rich repeat-containing protein 59 (307 aa).

Topologically, residues 1–247 (MARANGRSQN…LAQRQSRLRK (247 aa)) are cytoplasmic. LRR repeat units lie at residues 10–31 (NLRD…SEVP), 40–61 (KATA…FCNL), 63–84 (HIVR…FGRL), 86–107 (NLQH…FAQL), and 109–131 (SLKW…AGDC). The stretch at 156-222 (EIELQRKLQL…LNSNKKAEEE (67 aa)) forms a coiled coil. Residues 170-238 (KKKLEAKQRV…RMATPKEKKL (69 aa)) form a disordered region. Composition is skewed to basic and acidic residues over residues 174 to 187 (EAKQ…EREM) and 194 to 238 (QQKE…EKKL). The helical transmembrane segment at 248–268 (IACILLFGLLVVLLVVVACRF) threads the bilayer. Over 269–307 (TDLKAINMCTSVNAIYKETLSALHSNPVLERFLQDPSSQ) the chain is Lumenal.

As to quaternary structure, interacts with SGO1.

It is found in the microsome membrane. The protein localises to the endoplasmic reticulum membrane. The protein resides in the nucleus envelope. Required for nuclear import of FGF1. This Xenopus laevis (African clawed frog) protein is Leucine-rich repeat-containing protein 59 (lrrc59).